The following is a 592-amino-acid chain: Bifunctional purine biosynthesis protein ATIC (592 aa).

An N-acetylmethionine modification is found at methionine 1. Residues 1–146 (MAPGHLALFS…KNHARVTVVC (146 aa)) enclose the MGS-like domain. The IMP cyclohydrolase stretch occupies residues 1 to 198 (MAPGHLALFS…ISDYFRKQYS (198 aa)). IMP contacts are provided by residues 12–14 (SDK), 34–37 (SGGT), 64–67 (RVKT), 101–102 (CN), and 125–126 (DI). Lysine 137 (proton donor/acceptor; for FAICAR cyclization activity) is an active-site residue. Residue lysine 199 is modified to N6-acetyllysine. Residues 199 to 592 (KGISQMPLRY…AHTNLRLFHH (394 aa)) are AICAR formyltransferase. 5-amino-1-(5-phospho-beta-D-ribosyl)imidazole-4-carboxamide-binding positions include 207-208 (RY), histidine 267, glycine 316, aspartate 339, asparagine 431, and arginine 451. The Proton acceptor; for AICAR formyltransferase activity role is filled by histidine 267. (6R)-10-formyltetrahydrofolate is bound at residue isoleucine 452. Residue phenylalanine 541 coordinates 5-amino-1-(5-phospho-beta-D-ribosyl)imidazole-4-carboxamide. (6R)-10-formyltetrahydrofolate-binding positions include aspartate 546 and 565–566 (SA). 5-amino-1-(5-phospho-beta-D-ribosyl)imidazole-4-carboxamide is bound at residue arginine 588.

This sequence belongs to the PurH family. Homodimer. Associates with internalized INSR complexes on Golgi/endosomal membranes. Interacts with INSR; ATIC together with PRKAA2/AMPK2 and HACD3/PTPLAD1 is proposed to be part of a signaling network regulating INSR autophosphorylation and endocytosis.

The protein resides in the cytoplasm. The protein localises to the cytosol. The enzyme catalyses (6R)-10-formyltetrahydrofolate + 5-amino-1-(5-phospho-beta-D-ribosyl)imidazole-4-carboxamide = 5-formamido-1-(5-phospho-D-ribosyl)imidazole-4-carboxamide + (6S)-5,6,7,8-tetrahydrofolate. It carries out the reaction 10-formyldihydrofolate + 5-amino-1-(5-phospho-beta-D-ribosyl)imidazole-4-carboxamide = 5-formamido-1-(5-phospho-D-ribosyl)imidazole-4-carboxamide + 7,8-dihydrofolate. The catalysed reaction is IMP + H2O = 5-formamido-1-(5-phospho-D-ribosyl)imidazole-4-carboxamide. The protein operates within purine metabolism; IMP biosynthesis via de novo pathway; 5-formamido-1-(5-phospho-D-ribosyl)imidazole-4-carboxamide from 5-amino-1-(5-phospho-D-ribosyl)imidazole-4-carboxamide (10-formyl THF route): step 1/1. It participates in purine metabolism; IMP biosynthesis via de novo pathway; IMP from 5-formamido-1-(5-phospho-D-ribosyl)imidazole-4-carboxamide: step 1/1. With respect to regulation, AMP and XMP inhibit AICAR formyltransferase activity. Bifunctional enzyme that catalyzes the last two steps of purine biosynthesis. Acts as a transformylase that incorporates a formyl group to the AMP analog AICAR (5-amino-1-(5-phospho-beta-D-ribosyl)imidazole-4-carboxamide) to produce the intermediate formyl-AICAR (FAICAR). Can use both 10-formyldihydrofolate and 10-formyltetrahydrofolate as the formyl donor in this reaction. Also catalyzes the cyclization of FAICAR to inosine monophosphate (IMP). Promotes insulin receptor/INSR autophosphorylation and is involved in INSR internalization. This chain is Bifunctional purine biosynthesis protein ATIC (ATIC), found in Pongo abelii (Sumatran orangutan).